The following is a 648-amino-acid chain: MVKVTDIVLWDKPGERVLLLGNQAIVRGALEGNIGVYAAYPGTPSSEITDTMAAVASRAGVYMEYSTNEKVAFETALSASWAGLRAMTAMKHVGLNVAMDSFMTVSYMGVNGGLVVVVADDPSMWSSQNEQDTRAIAKFANIPVLEPSSVQEAKDMVKYAFEISEKYGQMVILRTTTRSSHMRGDVVLGELPQEIKEGKRKFGDFKKNPERYVDIPAFQRPKHKWLLETIEKFREEFNNSPFNWIEGPEDAKVGIIAPGLSYAYVKEALAWLGVDNVKVLKLGTPFPVPYGLLEKFFQGLERVLIVEELEPVVEEQVKVWAFDKGINVEIHGKDLVPRVYEMTTRRAVEAIAKFLGLETPINFEEIDEKYKKVQEIVPPRPPSLCPACPHRNTFFALRKAATPRAIYPSDIGCYTLGVLPPLKTVDTTIAMGGSIGVAHGLSIALNGSIAEEQRKTGKGKKIIAATIGDSTFFHTGLPALANAIYNRSNVLIVVLDNLVTAMTGDQPNPGTGETPHGPGKRILIEEVAKAMGADFVAVVDPYDIKETYETFKKALEVEGVSVVVARRACALYRIGQLRRAGKQWPIYQVNEDKCTGCKICINAYGCPAIYWDPEKKKAKVDPLMCWGCGGCAQVCPFDAFEKVREGEL.

2 4Fe-4S ferredoxin-type domains span residues P585–E614 and K616–E645. 8 residues coordinate [4Fe-4S] cluster: C594, C597, C600, C606, C625, C628, C631, and C635.

In terms of assembly, heterodimer of the IorA and IorB subunits. It depends on [4Fe-4S] cluster as a cofactor.

The enzyme catalyses indole-3-pyruvate + 2 oxidized [2Fe-2S]-[ferredoxin] + CoA = (indol-3-yl)acetyl-CoA + 2 reduced [2Fe-2S]-[ferredoxin] + CO2 + H(+). Catalyzes the ferredoxin-dependent oxidative decarboxylation of arylpyruvates. The protein is Indolepyruvate oxidoreductase subunit IorA (iorA) of Pyrococcus abyssi (strain GE5 / Orsay).